A 568-amino-acid chain; its full sequence is MSVSVFNRCWSKVILETLVRQGVSHVCIAPGSRSTPLTLEAVRLQNAGSVTCHTHFDERGLGFFALGIAKATQSPVAIIVTSGTATANLYPAIIEARQTGVNLFVLTADRPPELWECGANQAILQQNMFGQYPVANVNLPKPNADYSAQWLISLLEQAAFQQKQQGGVVHINVPFTEPLYDATDEEVNSHSWLQPLQRWLIQNKSWINVEVQQNEVLMHENWDHWRTKRGVVVVGQLPAEQAMGINSWASAMGWVLLTDIQSGVVPTTPYEDIWLANQTVREKLLQADIVIQFGARFISKRINQFLQAFKGEFWLVEQSGKALDPYHHSLTRFNAKAHHWLRAHPPLRQKPWLLEPLALSKFCATFIEQQVGGNLTEASLALRLPTLLPYNGVLFLGNSLLVRLVDALTQLPESYPVYTNRGASGIDGLLATAAGIGIGSNKPVVAVIGDTSTLYDLNSFALFKNVTQPTLIFVINNNGGAIFDMLPVDEQVKDQFYRLPHNGDFSQIAAMFDLKYAHPYTWADLNSVVKQAYSRRKATLIEIKTNPSDGSSLYKRLIDQISHAVIGA.

The protein belongs to the TPP enzyme family. MenD subfamily. In terms of assembly, homodimer. Requires Mg(2+) as cofactor. Mn(2+) serves as cofactor. The cofactor is thiamine diphosphate.

It carries out the reaction isochorismate + 2-oxoglutarate + H(+) = 5-enolpyruvoyl-6-hydroxy-2-succinyl-cyclohex-3-ene-1-carboxylate + CO2. The protein operates within quinol/quinone metabolism; 1,4-dihydroxy-2-naphthoate biosynthesis; 1,4-dihydroxy-2-naphthoate from chorismate: step 2/7. It participates in quinol/quinone metabolism; menaquinone biosynthesis. Catalyzes the thiamine diphosphate-dependent decarboxylation of 2-oxoglutarate and the subsequent addition of the resulting succinic semialdehyde-thiamine pyrophosphate anion to isochorismate to yield 2-succinyl-5-enolpyruvyl-6-hydroxy-3-cyclohexene-1-carboxylate (SEPHCHC). The polypeptide is 2-succinyl-5-enolpyruvyl-6-hydroxy-3-cyclohexene-1-carboxylate synthase (Haemophilus influenzae (strain 86-028NP)).